We begin with the raw amino-acid sequence, 425 residues long: GTPase Obg (425 aa).

The region spanning 1–158 (MFKDYAKIHV…LWLELELKLL (158 aa)) is the Obg domain. Residues 159–329 (ADVGLVGFPN…LIYRTYRLLE (171 aa)) enclose the OBG-type G domain. Residues 165–172 (GFPNAGKS), 190–194 (FTTLE), 212–215 (DIPG), 282–285 (NKTD), and 310–312 (SAL) each bind GTP. S172 and T192 together coordinate Mg(2+). An OCT domain is found at 341–421 (VPDERETDVT…IGRFEFEYSE (81 aa)).

This sequence belongs to the TRAFAC class OBG-HflX-like GTPase superfamily. OBG GTPase family. In terms of assembly, monomer. Requires Mg(2+) as cofactor.

The protein localises to the cytoplasm. Functionally, an essential GTPase which binds GTP, GDP and possibly (p)ppGpp with moderate affinity, with high nucleotide exchange rates and a fairly low GTP hydrolysis rate. Plays a role in control of the cell cycle, stress response, ribosome biogenesis and in those bacteria that undergo differentiation, in morphogenesis control. This Desulforudis audaxviator (strain MP104C) protein is GTPase Obg.